The primary structure comprises 306 residues: Pantothenate kinase (306 aa).

91–98 contacts ATP; sequence GSVAVGKS.

It belongs to the prokaryotic pantothenate kinase family.

Its subcellular location is the cytoplasm. It carries out the reaction (R)-pantothenate + ATP = (R)-4'-phosphopantothenate + ADP + H(+). It functions in the pathway cofactor biosynthesis; coenzyme A biosynthesis; CoA from (R)-pantothenate: step 1/5. This is Pantothenate kinase (coaA) from Streptococcus pyogenes serotype M1.